Consider the following 104-residue polypeptide: MAKIVSGDDVIVITGSDKGKVGKVVKILRKGGRVLAKVASVALCRKSVKPSKNREGGIFSIERFIDISNVAFFDSEAGVRTRVGYKFVDGKKVRYLKSSGRVLD.

It belongs to the universal ribosomal protein uL24 family. As to quaternary structure, part of the 50S ribosomal subunit.

Functionally, one of two assembly initiator proteins, it binds directly to the 5'-end of the 23S rRNA, where it nucleates assembly of the 50S subunit. One of the proteins that surrounds the polypeptide exit tunnel on the outside of the subunit. The polypeptide is Large ribosomal subunit protein uL24 (Anaplasma phagocytophilum (strain HZ)).